The primary structure comprises 188 residues: MLGNFRFDDMVEKLSRRVAGRTSRRGAIGRLGTVLAGAALVPLLPVDRRGRVSRANAAGPAEGVDPRAKWQPQDNDIQACDYWRHCSIDGNICDCSGGSLTNCPPGTKLATASWVASCYNPTDGQSYLIAYRDCCGYNVSGRCPCLNTEGELPVYRPEFANDIIWCFGAEDDAMTYHCTISPIVGKAS.

The segment at residues 1–57 is a signal peptide (tat-type signal); the sequence is MLGNFRFDDMVEKLSRRVAGRTSRRGAIGRLGTVLAGAALVPLLPVDRRGRVSRANA. 6 disulfides stabilise this stretch: Cys-80-Cys-145, Cys-86-Cys-118, Cys-93-Cys-178, Cys-95-Cys-143, Cys-103-Cys-134, and Cys-135-Cys-166. Residue Trp-114 is modified to Tryptophylquinone. Positions 114 to 165 form a cross-link, tryptophan tryptophylquinone (Trp-Trp); sequence WVASCYNPTDGQSYLIAYRDCCGYNVSGRCPCLNTEGELPVYRPEFANDIIW.

It belongs to the aromatic amine dehydrogenase light chain family. In terms of assembly, heterotetramer of two light and two heavy chains. Requires tryptophan tryptophylquinone residue as cofactor. In terms of processing, predicted to be exported by the Tat system. The position of the signal peptide cleavage has been experimentally proven. Post-translationally, tryptophan tryptophylquinone (TTQ) is formed by oxidation of the indole ring of a tryptophan to form tryptophylquinone followed by covalent cross-linking with another tryptophan residue.

The protein resides in the periplasm. It carries out the reaction 2 oxidized [amicyanin] + methylamine + H2O = 2 reduced [amicyanin] + formaldehyde + NH4(+) + 2 H(+). Its pathway is one-carbon metabolism; methylamine degradation; formaldehyde from methylamine: step 1/1. In terms of biological role, methylamine dehydrogenase carries out the oxidation of methylamine. Electrons are passed from methylamine dehydrogenase to amicyanin. The polypeptide is Methylamine dehydrogenase light chain (mauA) (Paracoccus versutus (Thiobacillus versutus)).